The sequence spans 475 residues: GTPase Der (475 aa).

EngA-type G domains follow at residues 3-167 (LTIA…GGER) and 205-380 (LRIA…RVWN). Residues 9-16 (GRPNVGKS), 56-60 (DTAGL), 119-122 (NKSE), 211-218 (GRPNTGKS), 258-262 (DTAGL), and 323-326 (NKWD) contribute to the GTP site. The KH-like domain occupies 381–465 (RRISTGKLNR…PIRISLRASD (85 aa)).

It belongs to the TRAFAC class TrmE-Era-EngA-EngB-Septin-like GTPase superfamily. EngA (Der) GTPase family. In terms of assembly, associates with the 50S ribosomal subunit.

In terms of biological role, GTPase that plays an essential role in the late steps of ribosome biogenesis. This is GTPase Der from Bartonella henselae (strain ATCC 49882 / DSM 28221 / CCUG 30454 / Houston 1) (Rochalimaea henselae).